Reading from the N-terminus, the 351-residue chain is Farnesyl pyrophosphate synthase (351 aa).

Lys-51, Arg-54, and Gln-92 together coordinate isopentenyl diphosphate. Mg(2+)-binding residues include Asp-99 and Asp-103. Dimethylallyl diphosphate is bound at residue Arg-108. Isopentenyl diphosphate is bound at residue Arg-109. 5 residues coordinate dimethylallyl diphosphate: Lys-196, Thr-197, Gln-236, Lys-253, and Lys-262.

The protein belongs to the FPP/GGPP synthase family. The cofactor is Mg(2+).

The enzyme catalyses isopentenyl diphosphate + dimethylallyl diphosphate = (2E)-geranyl diphosphate + diphosphate. It carries out the reaction isopentenyl diphosphate + (2E)-geranyl diphosphate = (2E,6E)-farnesyl diphosphate + diphosphate. The protein operates within isoprenoid biosynthesis; farnesyl diphosphate biosynthesis; farnesyl diphosphate from geranyl diphosphate and isopentenyl diphosphate: step 1/1. Its pathway is isoprenoid biosynthesis; geranyl diphosphate biosynthesis; geranyl diphosphate from dimethylallyl diphosphate and isopentenyl diphosphate: step 1/1. Farnesyl pyrophosphate synthase; part of the second module of ergosterol biosynthesis pathway that includes the middle steps of the pathway. ERG20 catalyzes the sequential condensation of isopentenyl pyrophosphate with dimethylallyl pyrophosphate, and then with the resultant geranylpyrophosphate to the ultimate product farnesyl pyrophosphate. The second module is carried out in the vacuole and involves the formation of farnesyl diphosphate, which is also an important intermediate in the biosynthesis of ubiquinone, dolichol, heme and prenylated proteins. Activity by the mevalonate kinase ERG12 first converts mevalonate into 5-phosphomevalonate. 5-phosphomevalonate is then further converted to 5-diphosphomevalonate by the phosphomevalonate kinase ERG8. The diphosphomevalonate decarboxylase MVD then produces isopentenyl diphosphate. The isopentenyl-diphosphate delta-isomerase IDI1 then catalyzes the 1,3-allylic rearrangement of the homoallylic substrate isopentenyl (IPP) to its highly electrophilic allylic isomer, dimethylallyl diphosphate (DMAPP). Finally the farnesyl diphosphate synthase ERG20 catalyzes the sequential condensation of isopentenyl pyrophosphate with dimethylallyl pyrophosphate, and then with the resultant geranylpyrophosphate to the ultimate product farnesyl pyrophosphate. This is Farnesyl pyrophosphate synthase from Candida albicans (strain SC5314 / ATCC MYA-2876) (Yeast).